The sequence spans 338 residues: Ornithine carbamoyltransferase (338 aa).

Residues 56 to 59 (STRT), R107, and 134 to 137 (HPTQ) each bind carbamoyl phosphate. Residues N168, D232, and 236 to 237 (SM) each bind L-ornithine. Carbamoyl phosphate contacts are provided by residues 274–275 (CL) and R320.

Belongs to the aspartate/ornithine carbamoyltransferase superfamily. OTCase family.

It localises to the cytoplasm. It carries out the reaction carbamoyl phosphate + L-ornithine = L-citrulline + phosphate + H(+). The protein operates within amino-acid degradation; L-arginine degradation via ADI pathway; carbamoyl phosphate from L-arginine: step 2/2. In terms of biological role, reversibly catalyzes the transfer of the carbamoyl group from carbamoyl phosphate (CP) to the N(epsilon) atom of ornithine (ORN) to produce L-citrulline. In Buchnera aphidicola subsp. Acyrthosiphon pisum (strain 5A), this protein is Ornithine carbamoyltransferase.